We begin with the raw amino-acid sequence, 594 residues long: MAVEKLITDHIDIWSSALQTRSMAGRGSNGKIDLYGIKKLRELILELAVRGKLVPQDPNDEPASELLKRIAAEKTELVKQGKIKKQKPLLRISEDEKPFELPEGWEWITLSEIATINPKIEVTDDEQEISFVPMPCISTRFDGAHDQEIKKWGEVKKGYTHFADGDIALAKITPCFENSKAVIFKGLKGGVGVGTTELHVARPISSELNLQYILLNIKSPHYLSMGESMMTGSAGQKRVPRSFFENYPIPFPPNTEQARIVGTFSKLMFLCDQLEQQSLTSLDAHQQLVETLLATLTDSQNAEELAENWARISQYFDTLFTTEASIDALKQTILQLAVMGKLVSQDPNDEPASELLKRVEQEKVQLVKEGKIKKQKPLPPVSDDEKPFELPIGWEWCRIGEIIANMDAGWSPACSPEPSPNEDIWGVLKTTAVQSLEYREQENKTLPNSKLPRPQYEVHDGDILVTRAGPKNRVGVSCLVEKTRSKLMISDKIIRFHLISDDISAKYISLCLNRGVTADYLEASKSGMAESQMNISQENLRSAPIALPPTAIQLKVISTIEDFFKVCDQLKSRLQSAQQTQLHLADALTDAALN.

This sequence belongs to the type-I restriction system S methylase family. The type I restriction/modification system is composed of three polypeptides R, M and S; the restriction enzyme has stoichiometry R(2)M(2)S(1) while the methyltransferase is M(2)S(1).

Its function is as follows. The specificity (S) subunit of a type I restriction enzyme; this subunit dictates DNA sequence specificity. The M and S subunits together form a methyltransferase (MTase) that methylates two adenine residues of the sequence 5'-GAGN(7)ATGC-3'. In the presence of the R subunit the complex can also act as an endonuclease, binding to the same target sequence but cutting the DNA some distance from this site. Whether the DNA is cut or modified depends on the methylation state of the target sequence. When the target site is unmodified, the DNA is cut. When the target site is hemimethylated, the complex acts as a maintenance MTase modifying the DNA so that both strands become methylated. After locating a non-methylated recognition site, the enzyme complex serves as a molecular motor that translocates DNA in an ATP-dependent manner until a collision occurs that triggers cleavage. The protein is Type I restriction enzyme EcoEI specificity subunit of Escherichia coli.